Here is a 535-residue protein sequence, read N- to C-terminus: Glutamate--cysteine ligase (535 aa).

The protein belongs to the glutamate--cysteine ligase type 1 family. Type 1 subfamily.

The enzyme catalyses L-cysteine + L-glutamate + ATP = gamma-L-glutamyl-L-cysteine + ADP + phosphate + H(+). It participates in sulfur metabolism; glutathione biosynthesis; glutathione from L-cysteine and L-glutamate: step 1/2. This chain is Glutamate--cysteine ligase, found in Pseudomonas savastanoi pv. phaseolicola (strain 1448A / Race 6) (Pseudomonas syringae pv. phaseolicola (strain 1448A / Race 6)).